A 103-amino-acid chain; its full sequence is Isocitrate dehydrogenase [NAD] subunit beta, mitochondrial (103 aa).

This sequence belongs to the isocitrate and isopropylmalate dehydrogenases family. As to quaternary structure, heterooligomer of subunits alpha (IDH3A), beta (IDH3B), and gamma (IDH3G) in the apparent ratio of 2:1:1. The heterodimer containing one IDH3A and one IDH3B subunit and the heterodimer containing one IDH3A and one IDH3G subunit assemble into a heterotetramer (which contains two subunits of IDH3A, one of IDH3B and one of IDH3G) and further into the heterooctamer.

The protein localises to the mitochondrion. Its activity is regulated as follows. The heterotetramer and the heterodimer composed of IDH3A and IDH3G subunits can be allosterically activated by citrate (CIT) or/and ADP, and the two activators can act independently or synergistically. The heterodimer composed of IDH3A and IDH3B subunits cannot be allosterically regulated and the allosteric regulation of the heterotetramer is through the IDH3G subunit and not the IDH3B subunit. The IDH3G subunit contains the allosteric site which consists of a CIT-binding site and an ADP-binding site, and the binding of CIT and ADP causes conformational changes at the allosteric site which are transmitted to the active site in the catalytic subunit (IDH3A) through a cascade of conformational changes at the heterodimer interface, leading to stabilization of the isocitrate-binding at the active site and thus activation of the enzyme. ATP can activate the heterotetramer and the heterodimer composed of IDH3A and IDH3G subunits at low concentrations but inhibits their activities at high concentrations, whereas ATP exhibits only inhibitory effect on the heterodimer composed of IDH3A and IDH3B subunits. Functionally, plays a structural role to facilitate the assembly and ensure the full activity of the enzyme catalyzing the decarboxylation of isocitrate (ICT) into alpha-ketoglutarate. The heterodimer composed of the alpha (IDH3A) and beta (IDH3B) subunits and the heterodimer composed of the alpha (IDH3A) and gamma (IDH3G) subunits, have considerable basal activity but the full activity of the heterotetramer (containing two subunits of IDH3A, one of IDH3B and one of IDH3G) requires the assembly and cooperative function of both heterodimers. The sequence is that of Isocitrate dehydrogenase [NAD] subunit beta, mitochondrial (IDH3B) from Sus scrofa (Pig).